The following is a 224-amino-acid chain: Retinoschisin (224 aa).

The signal sequence occupies residues 1–23 (MSRKIEGFLLLLLFGYEATLGLS). The F5/8 type C domain occupies 63–219 (CPYHKPLGFE…IAIRMELLEC (157 aa)). 2 disulfides stabilise this stretch: Cys-63-Cys-219 and Cys-110-Cys-142.

As to quaternary structure, homooctamer of 4 homodimers; disulfide-linked. The homooctamer has a flat, cogwheel structure with a diameter of about 14 nm. Two stacked octamers can assemble to form a hexadecamer. In terms of tissue distribution, restricted to the retina (at protein level). Detected in the inner segment of the photoreceptors, the inner nuclear layer, the inner plexiform layer and the ganglion cell layer (at protein level). At the macula, expressed in both the outer and inner nuclear layers and in the inner plexiform layer (at protein level). Detected in retina. Detected only within the photoreceptor cell layer, most prominently within the inner segments of the photoreceptors. Undetectable in the inner plexiform layers and the inner nuclear layer.

Its subcellular location is the secreted. It localises to the cell membrane. Its function is as follows. Binds negatively charged membrane lipids, such as phosphatidylserine and phosphoinositides. May play a role in cell-cell adhesion processes in the retina, via homomeric interaction between octamers present on the surface of two neighboring cells. Required for normal structure and function of the retina. The chain is Retinoschisin (RS1) from Homo sapiens (Human).